A 412-amino-acid chain; its full sequence is Multifunctional CCA protein (412 aa).

Residues Gly-8 and Arg-11 each contribute to the ATP site. Gly-8 and Arg-11 together coordinate CTP. Asp-21 and Asp-23 together coordinate Mg(2+). Positions 91, 137, and 140 each coordinate ATP. CTP-binding residues include Arg-91, Arg-137, and Arg-140. In terms of domain architecture, HD spans 225-326; the sequence is TGIHVMMVID…ADMLQATDAY (102 aa).

This sequence belongs to the tRNA nucleotidyltransferase/poly(A) polymerase family. Bacterial CCA-adding enzyme type 1 subfamily. As to quaternary structure, monomer. Can also form homodimers and oligomers. Mg(2+) is required as a cofactor. It depends on Ni(2+) as a cofactor.

The enzyme catalyses a tRNA precursor + 2 CTP + ATP = a tRNA with a 3' CCA end + 3 diphosphate. It carries out the reaction a tRNA with a 3' CCA end + 2 CTP + ATP = a tRNA with a 3' CCACCA end + 3 diphosphate. Its function is as follows. Catalyzes the addition and repair of the essential 3'-terminal CCA sequence in tRNAs without using a nucleic acid template. Adds these three nucleotides in the order of C, C, and A to the tRNA nucleotide-73, using CTP and ATP as substrates and producing inorganic pyrophosphate. tRNA 3'-terminal CCA addition is required both for tRNA processing and repair. Also involved in tRNA surveillance by mediating tandem CCA addition to generate a CCACCA at the 3' terminus of unstable tRNAs. While stable tRNAs receive only 3'-terminal CCA, unstable tRNAs are marked with CCACCA and rapidly degraded. The polypeptide is Multifunctional CCA protein (Nitrosomonas eutropha (strain DSM 101675 / C91 / Nm57)).